The sequence spans 316 residues: 4-hydroxy-3-methylbut-2-enyl diphosphate reductase (316 aa).

Cys-12 contacts [4Fe-4S] cluster. Residues His-41 and His-74 each coordinate (2E)-4-hydroxy-3-methylbut-2-enyl diphosphate. Dimethylallyl diphosphate is bound by residues His-41 and His-74. Isopentenyl diphosphate is bound by residues His-41 and His-74. Cys-96 lines the [4Fe-4S] cluster pocket. His-124 is a binding site for (2E)-4-hydroxy-3-methylbut-2-enyl diphosphate. Position 124 (His-124) interacts with dimethylallyl diphosphate. His-124 contributes to the isopentenyl diphosphate binding site. Residue Glu-126 is the Proton donor of the active site. Thr-167 contacts (2E)-4-hydroxy-3-methylbut-2-enyl diphosphate. Residue Cys-197 participates in [4Fe-4S] cluster binding. The (2E)-4-hydroxy-3-methylbut-2-enyl diphosphate site is built by Ser-225, Ser-226, Asn-227, and Ser-269. Residues Ser-225, Ser-226, Asn-227, and Ser-269 each coordinate dimethylallyl diphosphate. The isopentenyl diphosphate site is built by Ser-225, Ser-226, Asn-227, and Ser-269.

The protein belongs to the IspH family. Homodimer. [4Fe-4S] cluster is required as a cofactor.

It carries out the reaction isopentenyl diphosphate + 2 oxidized [2Fe-2S]-[ferredoxin] + H2O = (2E)-4-hydroxy-3-methylbut-2-enyl diphosphate + 2 reduced [2Fe-2S]-[ferredoxin] + 2 H(+). The enzyme catalyses dimethylallyl diphosphate + 2 oxidized [2Fe-2S]-[ferredoxin] + H2O = (2E)-4-hydroxy-3-methylbut-2-enyl diphosphate + 2 reduced [2Fe-2S]-[ferredoxin] + 2 H(+). Its pathway is isoprenoid biosynthesis; dimethylallyl diphosphate biosynthesis; dimethylallyl diphosphate from (2E)-4-hydroxy-3-methylbutenyl diphosphate: step 1/1. The protein operates within isoprenoid biosynthesis; isopentenyl diphosphate biosynthesis via DXP pathway; isopentenyl diphosphate from 1-deoxy-D-xylulose 5-phosphate: step 6/6. In terms of biological role, catalyzes the conversion of 1-hydroxy-2-methyl-2-(E)-butenyl 4-diphosphate (HMBPP) into a mixture of isopentenyl diphosphate (IPP) and dimethylallyl diphosphate (DMAPP). Acts in the terminal step of the DOXP/MEP pathway for isoprenoid precursor biosynthesis. The sequence is that of 4-hydroxy-3-methylbut-2-enyl diphosphate reductase from Salmonella agona (strain SL483).